Here is a 222-residue protein sequence, read N- to C-terminus: Pro-opiomelanocortin-1 (222 aa).

The N-terminal stretch at 1–28 is a signal peptide; the sequence is MVRGERMLCPAWLLALAVLCAAGSEVRA. Residues 29-105 constitute a propeptide that is removed on maturation; sequence QCMEDARCRD…DPESSPQHEH (77 aa).

It belongs to the POMC family. In terms of processing, specific enzymatic cleavages at paired basic residues yield the different active peptides.

The protein resides in the secreted. Stimulates the adrenal glands to release cortisol. In terms of biological role, anorexigenic peptide. Increases the pigmentation of skin by increasing melanin production in melanocytes. Its function is as follows. Increases the pigmentation of skin by increasing melanin production in melanocytes. Functionally, endogenous orexigenic opiate. Endogenous opiate. The polypeptide is Pro-opiomelanocortin-1 (pomca) (Cyprinus carpio (Common carp)).